Reading from the N-terminus, the 212-residue chain is Orotate phosphoribosyltransferase (212 aa).

5-phospho-alpha-D-ribose 1-diphosphate-binding positions include Arg97, Lys101, His103, and 123 to 131 (EDLISTGGS). Ser127 is an orotate binding site.

This sequence belongs to the purine/pyrimidine phosphoribosyltransferase family. PyrE subfamily. In terms of assembly, homodimer. Requires Mg(2+) as cofactor.

The enzyme catalyses orotidine 5'-phosphate + diphosphate = orotate + 5-phospho-alpha-D-ribose 1-diphosphate. It participates in pyrimidine metabolism; UMP biosynthesis via de novo pathway; UMP from orotate: step 1/2. Functionally, catalyzes the transfer of a ribosyl phosphate group from 5-phosphoribose 1-diphosphate to orotate, leading to the formation of orotidine monophosphate (OMP). This Phocaeicola vulgatus (strain ATCC 8482 / DSM 1447 / JCM 5826 / CCUG 4940 / NBRC 14291 / NCTC 11154) (Bacteroides vulgatus) protein is Orotate phosphoribosyltransferase.